A 125-amino-acid polypeptide reads, in one-letter code: uncharacterized protein (125 aa).

A helical membrane pass occupies residues 96–113; sequence LFMMSIVSSYVCYITVLL.

It localises to the membrane. This is an uncharacterized protein from Saccharomyces cerevisiae (strain ATCC 204508 / S288c) (Baker's yeast).